Here is a 165-residue protein sequence, read N- to C-terminus: Mediator of RNA polymerase II transcription subunit 10 (165 aa).

Disordered stretches follow at residues 54–81 (SLHTRDDPTASTTAPNQYQSTNPNDPAL) and 143–165 (LRGEVDKVIQATGGKKQSERERG). A compositionally biased stretch (polar residues) spans 62–77 (TASTTAPNQYQSTNPN).

Belongs to the Mediator complex subunit 10 family. In terms of assembly, component of the Mediator complex.

It localises to the nucleus. Component of the Mediator complex, a coactivator involved in the regulated transcription of nearly all RNA polymerase II-dependent genes. Mediator functions as a bridge to convey information from gene-specific regulatory proteins to the basal RNA polymerase II transcription machinery. Mediator is recruited to promoters by direct interactions with regulatory proteins and serves as a scaffold for the assembly of a functional preinitiation complex with RNA polymerase II and the general transcription factors. This is Mediator of RNA polymerase II transcription subunit 10 (nut2) from Emericella nidulans (strain FGSC A4 / ATCC 38163 / CBS 112.46 / NRRL 194 / M139) (Aspergillus nidulans).